Reading from the N-terminus, the 306-residue chain is Ribosomal protein L11 methyltransferase (306 aa).

S-adenosyl-L-methionine-binding residues include threonine 154, glycine 179, aspartate 201, and asparagine 242.

The protein belongs to the methyltransferase superfamily. PrmA family.

The protein localises to the cytoplasm. It catalyses the reaction L-lysyl-[protein] + 3 S-adenosyl-L-methionine = N(6),N(6),N(6)-trimethyl-L-lysyl-[protein] + 3 S-adenosyl-L-homocysteine + 3 H(+). Functionally, methylates ribosomal protein L11. The protein is Ribosomal protein L11 methyltransferase of Xanthomonas axonopodis pv. citri (strain 306).